We begin with the raw amino-acid sequence, 223 residues long: MESDRFDYLFKFLIIGNAGTGKTCILRRYTERKFFPNTQHTIGAEFGSRVISVDGTHVKIQIWDTAGQERFRSMARSYYHDAVGTLLVYDITNRTSFGAVEQWLGDARHLATPGVVVILVGNKKDLRDTDGQVTHWEANTFAQENGLQFIETSALTGENIDDAFTSCVRVLLSKVKSGELGADRLLVGSNKQHLQAVNLTASATSVSASQSSAATAHSDTCLC.

16–23 serves as a coordination point for GTP; the sequence is GNAGTGKT. The short motif at 38-46 is the Effector region element; that stretch reads TQHTIGAEF. GTP-binding positions include 64–68 and 122–125; these read DTAGQ and NKKD. 2 S-geranylgeranyl cysteine lipidation sites follow: cysteine 221 and cysteine 223. Position 223 is a cysteine methyl ester (cysteine 223).

It belongs to the small GTPase superfamily. Rab family.

The protein resides in the cell membrane. Its function is as follows. Protein transport. Probably involved in vesicular traffic. This chain is Probable Ras-related protein Rab-4A, found in Echinococcus multilocularis (Fox tapeworm).